Reading from the N-terminus, the 345-residue chain is N-acetyl-gamma-glutamyl-phosphate reductase (345 aa).

Cys-149 is a catalytic residue.

It belongs to the NAGSA dehydrogenase family. Type 1 subfamily.

It localises to the cytoplasm. The enzyme catalyses N-acetyl-L-glutamate 5-semialdehyde + phosphate + NADP(+) = N-acetyl-L-glutamyl 5-phosphate + NADPH + H(+). Its pathway is amino-acid biosynthesis; L-arginine biosynthesis; N(2)-acetyl-L-ornithine from L-glutamate: step 3/4. Catalyzes the NADPH-dependent reduction of N-acetyl-5-glutamyl phosphate to yield N-acetyl-L-glutamate 5-semialdehyde. The polypeptide is N-acetyl-gamma-glutamyl-phosphate reductase (Bacillus mycoides (strain KBAB4) (Bacillus weihenstephanensis)).